Consider the following 336-residue polypeptide: Dihydroorotate dehydrogenase (quinone) (336 aa).

FMN contacts are provided by residues 62–66 (AGLDK) and T86. K66 lines the substrate pocket. Substrate is bound at residue 111 to 115 (NRMGF). Positions 139 and 172 each coordinate FMN. Position 172 (N172) interacts with substrate. S175 (nucleophile) is an active-site residue. N177 contributes to the substrate binding site. K217 and T245 together coordinate FMN. 246–247 (NT) lines the substrate pocket. Residues G268, G297, and 318–319 (YS) contribute to the FMN site.

It belongs to the dihydroorotate dehydrogenase family. Type 2 subfamily. As to quaternary structure, monomer. Requires FMN as cofactor.

The protein localises to the cell membrane. The catalysed reaction is (S)-dihydroorotate + a quinone = orotate + a quinol. It functions in the pathway pyrimidine metabolism; UMP biosynthesis via de novo pathway; orotate from (S)-dihydroorotate (quinone route): step 1/1. In terms of biological role, catalyzes the conversion of dihydroorotate to orotate with quinone as electron acceptor. The sequence is that of Dihydroorotate dehydrogenase (quinone) from Salmonella arizonae (strain ATCC BAA-731 / CDC346-86 / RSK2980).